A 635-amino-acid polypeptide reads, in one-letter code: Chaperone protein HtpG (635 aa).

Residues 1–343 are a; substrate-binding; it reads MSVETQKETL…SNDLSLNVSR (343 aa). Positions 344–560 are b; the sequence is EILQKDPIID…EQDMGLQMRQ (217 aa). Residues 561–635 are c; sequence ILEASGQKVP…LNKLLVELSV (75 aa).

The protein belongs to the heat shock protein 90 family. In terms of assembly, homodimer.

It localises to the cytoplasm. In terms of biological role, molecular chaperone. Has ATPase activity. In Pseudomonas syringae pv. tomato (strain ATCC BAA-871 / DC3000), this protein is Chaperone protein HtpG.